Reading from the N-terminus, the 269-residue chain is Phosphate import ATP-binding protein PstB (269 aa).

One can recognise an ABC transporter domain in the interval 21 to 264; it reads SEVRNLSFYY…PKNKQTEDYI (244 aa). 53–60 contributes to the ATP binding site; sequence GPSGCGKS.

The protein belongs to the ABC transporter superfamily. Phosphate importer (TC 3.A.1.7) family. As to quaternary structure, the complex is composed of two ATP-binding proteins (PstB), two transmembrane proteins (PstC and PstA) and a solute-binding protein (PstS).

The protein localises to the cell inner membrane. It carries out the reaction phosphate(out) + ATP + H2O = ADP + 2 phosphate(in) + H(+). Its function is as follows. Part of the ABC transporter complex PstSACB involved in phosphate import. Responsible for energy coupling to the transport system. The polypeptide is Phosphate import ATP-binding protein PstB (Nitrosospira multiformis (strain ATCC 25196 / NCIMB 11849 / C 71)).